A 152-amino-acid polypeptide reads, in one-letter code: UPF0756 membrane protein PEPE_1090 (152 aa).

4 consecutive transmembrane segments (helical) span residues 4–24 (WLFL…SLII), 52–72 (WGVT…KIGF), 85–105 (WIAV…VGFL), and 115–135 (LVMG…GPII).

It belongs to the UPF0756 family.

It is found in the cell membrane. This chain is UPF0756 membrane protein PEPE_1090, found in Pediococcus pentosaceus (strain ATCC 25745 / CCUG 21536 / LMG 10740 / 183-1w).